Consider the following 58-residue polypeptide: Large ribosomal subunit protein uL30 (58 aa).

It belongs to the universal ribosomal protein uL30 family. In terms of assembly, part of the 50S ribosomal subunit.

This Blochmanniella floridana protein is Large ribosomal subunit protein uL30.